We begin with the raw amino-acid sequence, 671 residues long: cGMP-dependent protein kinase 1 (671 aa).

The residue at position 2 (serine 2) is an N-acetylserine. Residues serine 2–threonine 59 are a coiled coil. The segment at serine 2 to aspartate 102 is required for dimerization. The interval alanine 9–glutamine 44 is leucine-zipper. An autoinhibitory domain region spans residues proline 50–histidine 75. Phosphothreonine; by autocatalysis is present on threonine 59. Residues phenylalanine 103 to proline 220 form a cGMP-binding, high affinity region. 3',5'-cyclic AMP-binding positions include glycine 167–alanine 170 and arginine 177–threonine 178. 3',5'-cyclic GMP is bound by residues glycine 167 to alanine 170, arginine 177 to threonine 178, arginine 282, glycine 291 to alanine 294, arginine 301 to threonine 302, and tyrosine 336. A cGMP-binding, low affinity region spans residues threonine 221–alanine 341. In terms of domain architecture, Protein kinase spans phenylalanine 360–phenylalanine 619. ATP is bound by residues leucine 366–valine 374 and lysine 390. The Proton acceptor role is filled by aspartate 484. Phosphothreonine is present on threonine 515. Residues glutamate 620 to phenylalanine 671 enclose the AGC-kinase C-terminal domain. The interval proline 635–phenylalanine 671 is disordered. Positions phenylalanine 652–proline 661 are enriched in acidic residues.

This sequence belongs to the protein kinase superfamily. AGC Ser/Thr protein kinase family. cGMP subfamily. As to quaternary structure, isoform alpha: parallel homodimer or heterodimer and also heterotetramer. Interacts directly with PPP1R12A. Non-covalent dimer of dimer of PRKG1-PRKG1 and PPP1R12A-PPP1R12A. This interaction targets PRKG1 to stress fibers to mediate smooth muscle cell relaxation and vasodilation in responses to rises in cGMP. Isoform beta: antiparallel homodimer. Part of cGMP kinase signaling complex at least composed of ACTA2/alpha-actin, CNN1/calponin H1, PLN/phospholamban, PRKG1 and ITPR1. Interacts with IRAG1. Forms a stable complex with ITPR1, IRAG1, and isoform beta of PRKG1. Interacts with TRPC7 (via ankyrin repeat domain). Isoform alpha interacts with RGS2. Interacts with GTF2I. Post-translationally, autophosphorylation increases kinase activity. 65 kDa monomer is produced by proteolytic cleavage. High concentrations are detected in various smooth muscle: lung, rumen, trachea, aorta, uterus and stomach. Isoform alpha is expressed predominantly in heart, cerebellum and lung, whereas the beta isoform is expressed in high concentrations in trachea, aorta, stomach and uterus.

It localises to the cytoplasm. It carries out the reaction L-seryl-[protein] + ATP = O-phospho-L-seryl-[protein] + ADP + H(+). It catalyses the reaction L-threonyl-[protein] + ATP = O-phospho-L-threonyl-[protein] + ADP + H(+). With respect to regulation, in the absence of cGMP, PRKG1 activity is suppressed by autoinhibitory contacts. In terms of biological role, serine/threonine protein kinase that acts as a key mediator of the nitric oxide (NO)/cGMP signaling pathway. GMP binding activates PRKG1, which phosphorylates serines and threonines on many cellular proteins. Numerous protein targets for PRKG1 phosphorylation are implicated in modulating cellular calcium, but the contribution of each of these targets may vary substantially among cell types. Proteins that are phosphorylated by PRKG1 regulate platelet activation and adhesion, smooth muscle contraction, cardiac function, gene expression, feedback of the NO-signaling pathway, and other processes involved in several aspects of the CNS like axon guidance, hippocampal and cerebellar learning, circadian rhythm and nociception. Smooth muscle relaxation is mediated through lowering of intracellular free calcium, by desensitization of contractile proteins to calcium, and by decrease in the contractile state of smooth muscle or in platelet activation. Regulates intracellular calcium levels via several pathways: phosphorylates IRAG1 and inhibits IP3-induced Ca(2+) release from intracellular stores, phosphorylation of KCNMA1 (BKCa) channels decreases intracellular Ca(2+) levels, which leads to increased opening of this channel. PRKG1 phosphorylates the canonical transient receptor potential channel (TRPC) family which inactivates the associated inward calcium current. Another mode of action of NO/cGMP/PKGI signaling involves PKGI-mediated inactivation of the Ras homolog gene family member A (RhoA). Phosphorylation of RHOA by PRKG1 blocks the action of this protein in myriad processes: regulation of RHOA translocation; decreasing contraction; controlling vesicle trafficking, reduction of myosin light chain phosphorylation resulting in vasorelaxation. Activation of PRKG1 by NO signaling also alters gene expression in a number of tissues. In smooth muscle cells, increased cGMP and PRKG1 activity influence expression of smooth muscle-specific contractile proteins, levels of proteins in the NO/cGMP signaling pathway, down-regulation of the matrix proteins osteopontin and thrombospondin-1 to limit smooth muscle cell migration and phenotype. Regulates vasodilator-stimulated phosphoprotein (VASP) functions in platelets and smooth muscle. The chain is cGMP-dependent protein kinase 1 (PRKG1) from Bos taurus (Bovine).